A 1527-amino-acid chain; its full sequence is Lysophospholipase nte1 (1527 aa).

Residues 1-73 are Cytoplasmic-facing; it reads MADSGASVPS…SPPTPTTMVG (73 aa). The helical transmembrane segment at 74–94 threads the bilayer; sequence WIGWVFSLVFQTIPSVLYWVI. At 95–116 the chain is on the lumenal side; it reads TFSTITLPTWLFTLFSMSLTFT. Residues 117–137 traverse the membrane as a helical segment; sequence MNFTTLLLIVLGLVSTVSWFI. Residues 138 to 1527 are Cytoplasmic-facing; sequence RYRFLNMYSR…RTLAPRRASI (1390 aa). Low complexity predominate over residues 299–310; the sequence is GSSSSMSSVQPS. Disordered stretches follow at residues 299-387, 567-596, and 765-785; these read GSSS…RRKS, DQFA…QRKD, and ATSR…KKPS. Polar residues predominate over residues 364 to 377; sequence RASSYHPNGQSTAS. A nucleoside 3',5'-cyclic phosphate-binding positions include 682-809 and 846-966; these read GGTS…SYRS and RLTG…IAQR. The PNPLA domain maps to 1224–1388; it reads LVLGGGGARG…IDNLTVAHMK (165 aa). The GXGXXG signature appears at 1228–1233; sequence GGGARG. Positions 1255 to 1259 match the GXSXG motif; it reads GTSIG. Serine 1257 acts as the Nucleophile in catalysis. Aspartate 1375 acts as the Proton acceptor in catalysis. A DGA/G motif is present at residues 1375–1377; sequence DGG. The segment at 1504-1527 is disordered; the sequence is LPLPEENEEKKKLQRTLAPRRASI.

This sequence belongs to the NTE family.

It localises to the endoplasmic reticulum membrane. It catalyses the reaction a 1-acyl-sn-glycero-3-phosphocholine + H2O = sn-glycerol 3-phosphocholine + a fatty acid + H(+). With respect to regulation, inhibited by organophosphorus esters. Intracellular phospholipase B that catalyzes the double deacylation of phosphatidylcholine (PC) to glycerophosphocholine (GroPCho). Plays an important role in membrane lipid homeostasis. Responsible for the rapid PC turnover in response to inositol, elevated temperatures, or when choline is present in the growth medium. This is Lysophospholipase nte1 (nte1) from Emericella nidulans (strain FGSC A4 / ATCC 38163 / CBS 112.46 / NRRL 194 / M139) (Aspergillus nidulans).